Consider the following 102-residue polypeptide: Thioredoxin (102 aa).

The Thioredoxin domain maps to 1-102 (MVQVVSQENF…SLIKLISKHQ (102 aa)). C28 and C31 are disulfide-bonded.

The protein belongs to the thioredoxin family.

In terms of biological role, participates in various redox reactions through the reversible oxidation of its active center dithiol to a disulfide and catalyzes dithiol-disulfide exchange reactions. This Chlamydia trachomatis serovar D (strain ATCC VR-885 / DSM 19411 / UW-3/Cx) protein is Thioredoxin (trxA).